The following is a 438-amino-acid chain: NADH-quinone oxidoreductase subunit D (438 aa).

This sequence belongs to the complex I 49 kDa subunit family. NDH-1 is composed of 14 different subunits. Subunits NuoB, C, D, E, F, and G constitute the peripheral sector of the complex.

It is found in the cell membrane. The enzyme catalyses a quinone + NADH + 5 H(+)(in) = a quinol + NAD(+) + 4 H(+)(out). NDH-1 shuttles electrons from NADH, via FMN and iron-sulfur (Fe-S) centers, to quinones in the respiratory chain. The immediate electron acceptor for the enzyme in this species is believed to be a menaquinone. Couples the redox reaction to proton translocation (for every two electrons transferred, four hydrogen ions are translocated across the cytoplasmic membrane), and thus conserves the redox energy in a proton gradient. The chain is NADH-quinone oxidoreductase subunit D from Rhodococcus jostii (strain RHA1).